Consider the following 286-residue polypeptide: Bifunctional protein FolD (286 aa).

Residues 160–162 (GRS), Ser-189, and Thr-230 contribute to the NADP(+) site.

The protein belongs to the tetrahydrofolate dehydrogenase/cyclohydrolase family. Homodimer.

The enzyme catalyses (6R)-5,10-methylene-5,6,7,8-tetrahydrofolate + NADP(+) = (6R)-5,10-methenyltetrahydrofolate + NADPH. The catalysed reaction is (6R)-5,10-methenyltetrahydrofolate + H2O = (6R)-10-formyltetrahydrofolate + H(+). It participates in one-carbon metabolism; tetrahydrofolate interconversion. Functionally, catalyzes the oxidation of 5,10-methylenetetrahydrofolate to 5,10-methenyltetrahydrofolate and then the hydrolysis of 5,10-methenyltetrahydrofolate to 10-formyltetrahydrofolate. This Chlamydia pneumoniae (Chlamydophila pneumoniae) protein is Bifunctional protein FolD.